The sequence spans 458 residues: Retinoic acid receptor alpha (458 aa).

The tract at residues 1–86 (MASNGGSCPS…PPPLPRIYKP (86 aa)) is modulating. Positions 54–68 (TPSPATIETQSTSSE) are enriched in polar residues. Residues 54–76 (TPSPATIETQSTSSEEIVPSPPS) form a disordered region. 2 NR C4-type zinc fingers span residues 87-107 (CFVC…CEGC) and 123-147 (CHRD…LQKC). The segment at residues 87 to 152 (CFVCQDKSSG…RLQKCFEVGM (66 aa)) is a DNA-binding region (nuclear receptor). The interval 153-182 (SKESVRNDRNKKKKQEAPKQECTESYIITP) is hinge. An NR LBD domain is found at 183 to 417 (EVEDLVEKVR…PLIQEMLENS (235 aa)). The short motif at 408-416 (PLIQEMLEN) is the 9aaTAD element. A disordered region spans residues 417–458 (SEGLDSLTGQPPRASSLAPPPGSCSPSLSPSSNRSSPTSHSP). Residues 440-458 (CSPSLSPSSNRSSPTSHSP) are compositionally biased toward low complexity.

The protein belongs to the nuclear hormone receptor family. NR1 subfamily. Heterodimer; with an rxr molecule. Binds DNA preferentially as a rar/rxr heterodimer. Expressed in forelimb, in the distal forelimb blastema, kidney, liver and hindlimb blastemal mesenchymal cells.

Its subcellular location is the nucleus. Its function is as follows. Receptor for retinoic acid. Retinoic acid receptors bind as heterodimers to their target response elements in response to their ligands, all-trans or 9-cis retinoic acid, and regulate gene expression in various biological processes. The rar/rxr heterodimers bind to the retinoic acid response elements (RARE) composed of tandem 5'-AGGTCA-3' sites known as DR1-DR5. Retinoic acid signaling appears to be involved in specifying proximal-distal axis in limb regeneration. This chain is Retinoic acid receptor alpha (RARA), found in Notophthalmus viridescens (Eastern newt).